Consider the following 158-residue polypeptide: Transcription elongation factor GreA (158 aa).

Belongs to the GreA/GreB family.

Functionally, necessary for efficient RNA polymerase transcription elongation past template-encoded arresting sites. The arresting sites in DNA have the property of trapping a certain fraction of elongating RNA polymerases that pass through, resulting in locked ternary complexes. Cleavage of the nascent transcript by cleavage factors such as GreA or GreB allows the resumption of elongation from the new 3'terminus. GreA releases sequences of 2 to 3 nucleotides. This Ruthia magnifica subsp. Calyptogena magnifica protein is Transcription elongation factor GreA.